Reading from the N-terminus, the 506-residue chain is Ribose import ATP-binding protein RbsA 2 (506 aa).

ABC transporter domains lie at 6 to 241 (LSMT…VGRV) and 254 to 499 (EKSN…SITI). ATP is bound at residue 38 to 45 (GENGAGKS).

Belongs to the ABC transporter superfamily. Ribose importer (TC 3.A.1.2.1) family. In terms of assembly, the complex is composed of an ATP-binding protein (RbsA), two transmembrane proteins (RbsC) and a solute-binding protein (RbsB).

It localises to the cell inner membrane. The catalysed reaction is D-ribose(out) + ATP + H2O = D-ribose(in) + ADP + phosphate + H(+). In terms of biological role, part of the ABC transporter complex RbsABC involved in ribose import. Responsible for energy coupling to the transport system. The chain is Ribose import ATP-binding protein RbsA 2 from Agrobacterium fabrum (strain C58 / ATCC 33970) (Agrobacterium tumefaciens (strain C58)).